We begin with the raw amino-acid sequence, 4017 residues long: Hybrid PKS-NRPS synthetase cghG (4017 aa).

The 433-residue stretch at 6–438 (QEPIAVIGMA…GTNAHAIIES (433 aa)) folds into the Ketosynthase family 3 (KS3) domain. Residues Cys-179, His-318, and His-358 each act as for beta-ketoacyl synthase activity in the active site. A malonyl-CoA:ACP transacylase (MAT) domain region spans residues 549–869 (VFTGQGAQWP…GRNKNDVVEL (321 aa)). Residues 936–1072 (NPILGRRCVE…ATLHVRFHEP (137 aa)) form an N-terminal hotdog fold region. The PKS/mFAS DH domain occupies 936–1243 (NPILGRRCVE…VKPFAAATAR (308 aa)). The segment at 937-1240 (PILGRRCVET…AVQVKPFAAA (304 aa)) is dehydratase (DH) domain. Residue His-969 is the Proton acceptor; for dehydratase activity of the active site. The interval 1087-1243 (LVKTDPGRLY…VKPFAAATAR (157 aa)) is C-terminal hotdog fold. Asp-1147 functions as the Proton donor; for dehydratase activity in the catalytic mechanism. Positions 1398-1585 (VANVWIARMV…GVDTHCPVEK (188 aa)) are methyltransferase (MT) domain. Positions 2127–2300 (TYFLVGLSGE…XXXXXXXXXX (174 aa)) are ketoreductase (KR)domain. The 77-residue stretch at 2423-2499 (AVVQDSLTEN…SLAEEAMAKI (77 aa)) folds into the Carrier 1 domain. Ser-2458 is subject to O-(pantetheine 4'-phosphoryl)serine. Disordered regions lie at residues 2547-2606 (VSEA…LQHR) and 2613-2632 (WAGS…AQRH). The span at 2548–2578 (SEASGVSATTPSTRAETDASSSPALVSTPGT) shows a compositional bias: polar residues. The condensation stretch occupies residues 2626–3020 (RRAAQRHETL…GDAMETEKLQ (395 aa)). Residues 3053–3453 (EVIAQNPTAV…SGFLAIEGRI (401 aa)) form an adenylation region. Positions 3567–3586 (PKTTTASTTADGTQPAQPLT) are disordered. The span at 3569–3579 (TTTASTTADGT) shows a compositional bias: low complexity. The Carrier 2 domain occupies 3583–3661 (QPLTPTESRL…SMAALLDQAG (79 aa)). The tract at residues 3588–3658 (TESRLATLWA…ELGSMAALLD (71 aa)) is thiolation. O-(pantetheine 4'-phosphoryl)serine is present on Ser-3621. A reductase-like region spans residues 3696–3920 (VTGASGSLGK…DVGRLEDVAA (225 aa)).

The protein in the C-terminal section; belongs to the NRP synthetase family.

The enzyme catalyses (2S,4S)-4-hydroxy-4-methylglutamate + 8 malonyl-CoA + 3 S-adenosyl-L-methionine + ATP + 8 NADPH + 11 H(+) = (2S)-3-[(2S)-3,5-dioxo-4-[(2E,4R,6R,8E,10E,12E)-4,6,12-trimethyltetradeca-2,8,10,12-tetraenoyl]pyrrolidin-2-yl]-2-hydroxy-2-methylpropanoate + AMP + 3 S-adenosyl-L-homocysteine + 8 CO2 + diphosphate + 8 NADP(+) + 8 CoA + 6 H2O. Its pathway is secondary metabolite biosynthesis. Its function is as follows. Hybrid PKS-NRPS synthetase; part of the gene cluster that mediates the biosynthesis of the tetramic acid Sch210972, a potential anti-HIV fungal natural product that contains a decalin core. The PKS module of cghG together with the enoylreductase cghC catalyze the formation of the polyketide unit which is then conjugated to 4-hydroxyl-4-methyl glutamate (HMG) by the condensation domain of the cghG NRPS module. One unique structural feature of Sch210972 is the tetramic acid motif proposed to be derived from the non-proteinogenic amino acid HMG, by a Dieckmann-type condensation catalyzed by the reductase domain of cghG. The aldolase cghB catalyzes the aldol condensation of 2 molecules of pyruvic acid to yield the intermediate 4-hydroxyl-4-methyl-2-oxoglutarate (HMOG), which can then be stereoselectively transaminated by an unidentified enzyme to form HMG. The Diels-Alderase cghA then uses the Dieckmann product released by cghG as substrate and catalyzes the Diels-Alder cycloaddition to form the decalin ring of Sch210972. CghA also suppresses the nonenzymatic formation of the alternative stereoisomer. The polypeptide is Hybrid PKS-NRPS synthetase cghG (Chaetomium globosum (strain ATCC 6205 / CBS 148.51 / DSM 1962 / NBRC 6347 / NRRL 1970) (Soil fungus)).